Reading from the N-terminus, the 364-residue chain is Probable cysteine protease RDL4 (364 aa).

The signal sequence occupies residues 1-23; the sequence is MGSAKSAMLILLVAMVIASCATA. A propeptide spans 24–136 (activation peptide); sequence IDMSVVSYDD…DRYKTSADDV (113 aa). N-linked (GlcNAc...) asparagine glycosylation occurs at N87. 3 disulfide bridges follow: C158/C199, C192/C232, and C291/C342. C161 is an active-site residue. Residues H297 and N317 contribute to the active site.

The protein belongs to the peptidase C1 family. Expressed in inflorescences.

In terms of biological role, probable thiol protease. This chain is Probable cysteine protease RDL4, found in Arabidopsis thaliana (Mouse-ear cress).